Reading from the N-terminus, the 213-residue chain is RNA pyrophosphohydrolase (213 aa).

Residues 6 to 149 (GFRPNVGIVL…KRGVYEIALT (144 aa)) form the Nudix hydrolase domain. The Nudix box motif lies at 38 to 59 (GGIDRGETPEQAMIRELHEEVG). The interval 185–213 (NFELPPGGSFEPNPQTSYGLDASGKPHET) is disordered.

The protein belongs to the Nudix hydrolase family. RppH subfamily. A divalent metal cation serves as cofactor.

Functionally, accelerates the degradation of transcripts by removing pyrophosphate from the 5'-end of triphosphorylated RNA, leading to a more labile monophosphorylated state that can stimulate subsequent ribonuclease cleavage. The chain is RNA pyrophosphohydrolase from Albidiferax ferrireducens (strain ATCC BAA-621 / DSM 15236 / T118) (Rhodoferax ferrireducens).